A 245-amino-acid polypeptide reads, in one-letter code: MYPVDLHMHTVASTHAYSTLHDYIAEAKRKGIKLFAITDHGPDMADAPHYWHFVNMRIWPRLVDGVGILRGIESNIKNIEGEIDCSGPMLTSLDLIIAGFHEPVFPPQDRDTHTQAMIAAMASGKVHMISHPGNPKFPVDIPAIAEAAARYQVALEINNSSFISSRVGSEDNCRAIAAAVRDAGGWVALGSDSHTAFTLGEFTECRKILDAVDFPEERILNVSPRRLLNFLESRGMPAIPEFADL.

9 residues coordinate Zn(2+): histidine 7, histidine 9, histidine 15, histidine 40, glutamate 73, histidine 101, histidine 131, aspartate 192, and histidine 194.

Belongs to the PHP family. In terms of assembly, homotrimer. Zn(2+) serves as cofactor.

The sequence is that of Probable phosphatase KPK_3500 from Klebsiella pneumoniae (strain 342).